The chain runs to 398 residues: Arylacetamide deacetylase (398 aa).

Residues 1-5 (MGRTI) lie on the Cytoplasmic side of the membrane. Residues 6 to 26 (FLLISVVLVAYYIYIPLPDDI) form a helical; Signal-anchor for type II membrane protein membrane-spanning segment. Residues 27-398 (EEPWKIILGN…QYLNWLHKNL (372 aa)) are Lumenal-facing. N-linked (GlcNAc...) asparagine glycosylation is present at asparagine 77. An Involved in the stabilization of the negatively charged intermediate by the formation of the oxyanion hole motif is present at residues 110-112 (HGG). An intrachain disulfide couples cysteine 115 to cysteine 339. Serine 188 is an active-site residue. Asparagine 192, asparagine 281, and asparagine 324 each carry an N-linked (GlcNAc...) asparagine glycan. Catalysis depends on residues aspartate 342 and histidine 372.

The protein belongs to the 'GDXG' lipolytic enzyme family. Highest levels in liver with lower levels in jejunum, kidney and testis.

It is found in the endoplasmic reticulum membrane. The protein localises to the microsome membrane. It catalyses the reaction a triacylglycerol + H2O = a diacylglycerol + a fatty acid + H(+). In terms of biological role, displays cellular triglyceride lipase activity in liver, increases the levels of intracellular fatty acids derived from the hydrolysis of newly formed triglyceride stores and plays a role in very low-density lipoprotein assembly. Displays serine esterase activity in liver. Deacetylates a variety of arylacetamide substrates, including xenobiotic compounds and procarcinogens, converting them to the primary arylamide compounds and increasing their toxicity. This chain is Arylacetamide deacetylase (Aadac), found in Rattus norvegicus (Rat).